We begin with the raw amino-acid sequence, 428 residues long: Enolase (428 aa).

Residue glutamine 163 participates in (2R)-2-phosphoglycerate binding. Glutamate 205 serves as the catalytic Proton donor. Mg(2+) is bound by residues aspartate 242, glutamate 285, and aspartate 312. (2R)-2-phosphoglycerate is bound by residues lysine 337, arginine 366, serine 367, and lysine 388. The Proton acceptor role is filled by lysine 337.

The protein belongs to the enolase family. As to quaternary structure, component of the RNA degradosome, a multiprotein complex involved in RNA processing and mRNA degradation. The cofactor is Mg(2+).

Its subcellular location is the cytoplasm. It localises to the secreted. It is found in the cell surface. The catalysed reaction is (2R)-2-phosphoglycerate = phosphoenolpyruvate + H2O. It functions in the pathway carbohydrate degradation; glycolysis; pyruvate from D-glyceraldehyde 3-phosphate: step 4/5. Functionally, catalyzes the reversible conversion of 2-phosphoglycerate (2-PG) into phosphoenolpyruvate (PEP). It is essential for the degradation of carbohydrates via glycolysis. This chain is Enolase, found in Halorhodospira halophila (strain DSM 244 / SL1) (Ectothiorhodospira halophila (strain DSM 244 / SL1)).